A 624-amino-acid chain; its full sequence is FAD-dependent monooxygenase apdD (624 aa).

FAD contacts are provided by Glu73 and Asp359.

The protein belongs to the paxM FAD-dependent monooxygenase family. Requires FAD as cofactor.

The protein operates within secondary metabolite biosynthesis. In terms of biological role, FAD-dependent monooxygenase; part of the gene cluster that mediates the biosynthesis of aspyridones. The polyketide-amino acid backbone preaspyridone A is first assembled by the PKS-NRPS hybrid apdA. The assembly of preaspyridone A is initiated by loading of malonyl-CoA onto apdA, followed by decarboxylation to yield the acetyl starter unit. The growing polyketide chain then elongates into a tetraketide. The adpA PKS module catalyzes three Claisen condensations, as well as beta-keto processing and methylation. Alpha-methylation step during polyketide synthesis is a prerequisite and a key checkpoint for chain transfer between PKS and NRPS modules. The downstream NRPS module contains the condensation (C), adenylation (A), and thiolation (T) domains and catalyzes the incorporation of tyrosine via the formation of the L-tyrosinyl-thioester and the amide linkage between L-tyrosinyl-thioester and the tetraketide. The bimodular assembly line is terminated with a reductase (R) domain that facilitates formation and release of the tetramic acid product. Because apdA lacks a designated enoylreductase (ER) domain, the required activity is provided the enoyl reductase apdC. ApdC appears to operate with different stereoselectivity in different PKS cycle. Combined with apdC, apdA is proposed to synthesize preaspyridone A via about 20 enzymatic steps. A number of oxidative steps performed successively by the cytochrome P450 monooxygenases apdE and apdB are required for the conversion of preaspyridone A to aspyridone A. The cytochrome P450 monooxygenase apdE is responsible for the oxidative dephenylation of preaspyridone A. Finally, the predicted FAD-dependent monooxygenase apdD and the acyl-CoA dehydrogenase apdG may be involved in the transformation of aspyridone A into aspyridone B. This Emericella nidulans (strain FGSC A4 / ATCC 38163 / CBS 112.46 / NRRL 194 / M139) (Aspergillus nidulans) protein is FAD-dependent monooxygenase apdD.